The sequence spans 760 residues: Prolyl endopeptidase FAP (760 aa).

Residues 1 to 4 (MKTW) are Cytoplasmic-facing. The chain crosses the membrane as a helical; Signal-anchor for type II membrane protein span at residues 5-25 (VKIVFGVATSAVLALLVMCIV). Residues 26–760 (LRPSRVHNSE…FLKQCFSLSD (735 aa)) lie on the Extracellular side of the membrane. N49, N92, and N99 each carry an N-linked (GlcNAc...) asparagine glycan. Substrate is bound by residues E203 and E204. N-linked (GlcNAc...) asparagine glycans are attached at residues N227 and N314. Intrachain disulfides connect C321–C332, C438–C441, and C448–C466. The active-site Charge relay system is the S624. The cysteines at positions 643 and 755 are disulfide-linked. N-linked (GlcNAc...) asparagine glycosylation occurs at N679. Catalysis depends on charge relay system residues D702 and H734.

This sequence belongs to the peptidase S9B family. As to quaternary structure, homodimer; homodimerization is required for activity of both plasma membrane and soluble forms. The monomer is inactive. Heterodimer with DPP4. Interacts with PLAUR; the interaction occurs at the cell surface of invadopodia membranes. Interacts with ITGB1. Interacts with ITGA3. Associates with integrin alpha-3/beta-1; the association occurs in a collagen-dependent manner at the cell surface of invadopodia membranes. N-glycosylated. Post-translationally, the N-terminus may be blocked. Expressed in adipose tissue. Expressed in the dermal fibroblasts in the fetal skin. Expressed in the granulation tissue of healing wounds and on reactive stromal fibroblast in epithelial cancers. Expressed in activated fibroblast-like synoviocytes from inflamed synovial tissues. Expressed in activated hepatic stellate cells (HSC) and myofibroblasts from cirrhotic liver, but not detected in normal liver. Expressed in glioma cells (at protein level). Expressed in glioblastomas and glioma cells. Isoform 1 and isoform 2 are expressed in melanoma, carcinoma and fibroblast cell lines.

It is found in the cell surface. Its subcellular location is the cell membrane. It localises to the cell projection. The protein resides in the lamellipodium membrane. The protein localises to the invadopodium membrane. It is found in the ruffle membrane. Its subcellular location is the membrane. It localises to the secreted. The protein resides in the cytoplasm. It catalyses the reaction Hydrolysis of Pro-|-Xaa &gt;&gt; Ala-|-Xaa in oligopeptides.. The enzyme catalyses Release of an N-terminal dipeptide, Xaa-Yaa-|-Zaa-, from a polypeptide, preferentially when Yaa is Pro, provided Zaa is neither Pro nor hydroxyproline.. With respect to regulation, gelatinase activity is inhibited by serine-protease inhibitors, such as phenylmethylsulfonyl fluoride (PMSF), 4-(2-aminoethyl)-benzenesulfonyl fluoride hydrochloride (AEBSF), 4-amidino phenylsulfonyl fluoride (APSF) and diisopropyl fluorophosphate (DFP), N-ethylmaleimide (NEM) and phenylmethylsulfonyl fluoride (PMSF). Dipeptidyl peptidase activity is inhibited by 2,2'-azino-bis(3-ethylbenzthiazoline-6-sulfonic acid), diisopropylfluorophosphate (DFP). Prolyl endopeptidase activity is inhibited by the boronic acid peptide Ac-Gly-BoroPro, Ac-Gly-Pro-chloromethyl ketone and Thr-Ser-Gly-chloromethyl ketone. Functionally, cell surface glycoprotein serine protease that participates in extracellular matrix degradation and involved in many cellular processes including tissue remodeling, fibrosis, wound healing, inflammation and tumor growth. Both plasma membrane and soluble forms exhibit post-proline cleaving endopeptidase activity, with a marked preference for Ala/Ser-Gly-Pro-Ser/Asn/Ala consensus sequences, on substrate such as alpha-2-antiplasmin SERPINF2 and SPRY2. Degrade also gelatin, heat-denatured type I collagen, but not native collagen type I and IV, vitronectin, tenascin, laminin, fibronectin, fibrin or casein. Also has dipeptidyl peptidase activity, exhibiting the ability to hydrolyze the prolyl bond two residues from the N-terminus of synthetic dipeptide substrates provided that the penultimate residue is proline, with a preference for Ala-Pro, Ile-Pro, Gly-Pro, Arg-Pro and Pro-Pro. Natural neuropeptide hormones for dipeptidyl peptidase are the neuropeptide Y (NPY), peptide YY (PYY), substance P (TAC1) and brain natriuretic peptide 32 (NPPB). The plasma membrane form, in association with either DPP4, PLAUR or integrins, is involved in the pericellular proteolysis of the extracellular matrix (ECM), and hence promotes cell adhesion, migration and invasion through the ECM. Plays a role in tissue remodeling during development and wound healing. Participates in the cell invasiveness towards the ECM in malignant melanoma cancers. Enhances tumor growth progression by increasing angiogenesis, collagen fiber degradation and apoptosis and by reducing antitumor response of the immune system. Promotes glioma cell invasion through the brain parenchyma by degrading the proteoglycan brevican. Acts as a tumor suppressor in melanocytic cells through regulation of cell proliferation and survival in a serine protease activity-independent manner. The protein is Prolyl endopeptidase FAP of Homo sapiens (Human).